The following is a 237-amino-acid chain: Ribosomal RNA small subunit methyltransferase G (237 aa).

S-adenosyl-L-methionine-binding positions include Gly78, Phe83, 129–130 (AE), and Arg148.

The protein belongs to the methyltransferase superfamily. RNA methyltransferase RsmG family.

The protein localises to the cytoplasm. Specifically methylates the N7 position of a guanine in 16S rRNA. The polypeptide is Ribosomal RNA small subunit methyltransferase G (Streptococcus thermophilus (strain ATCC BAA-491 / LMD-9)).